Here is a 131-residue protein sequence, read N- to C-terminus: Small ribosomal subunit protein uS8 (131 aa).

Belongs to the universal ribosomal protein uS8 family. As to quaternary structure, part of the 30S ribosomal subunit. Contacts proteins S5 and S12.

One of the primary rRNA binding proteins, it binds directly to 16S rRNA central domain where it helps coordinate assembly of the platform of the 30S subunit. This Erythrobacter litoralis (strain HTCC2594) protein is Small ribosomal subunit protein uS8.